The sequence spans 131 residues: Fumarate reductase subunit C (131 aa).

The next 3 membrane-spanning stretches (helical) occupy residues 30 to 50 (EGTA…LFAL), 57 to 77 (WMGF…LITL), and 109 to 129 (IIKG…YVAL).

The protein belongs to the FrdC family. As to quaternary structure, part of an enzyme complex containing four subunits: a flavoprotein (FrdA), an iron-sulfur protein (FrdB), and two hydrophobic anchor proteins (FrdC and FrdD).

It localises to the cell inner membrane. Functionally, two distinct, membrane-bound, FAD-containing enzymes are responsible for the catalysis of fumarate and succinate interconversion; fumarate reductase is used in anaerobic growth, and succinate dehydrogenase is used in aerobic growth. Anchors the catalytic components of the fumarate reductase complex to the cell inner membrane, binds quinones. The chain is Fumarate reductase subunit C from Salmonella heidelberg (strain SL476).